The primary structure comprises 478 residues: Glutamate-1-semialdehyde 2,1-aminomutase, chloroplastic (478 aa).

The transit peptide at 1–40 directs the protein to the chloroplast; the sequence is MAGAAAASAAAAAVASGISARPVAPRPSPSRARAPRSVVR. The interval 15 to 36 is disordered; the sequence is ASGISARPVAPRPSPSRARAPR. Lys-318 carries the N6-(pyridoxal phosphate)lysine modification.

This sequence belongs to the class-III pyridoxal-phosphate-dependent aminotransferase family. HemL subfamily. Homodimer. Pyridoxal 5'-phosphate is required as a cofactor.

The protein resides in the plastid. Its subcellular location is the chloroplast. The catalysed reaction is (S)-4-amino-5-oxopentanoate = 5-aminolevulinate. It functions in the pathway porphyrin-containing compound metabolism; protoporphyrin-IX biosynthesis; 5-aminolevulinate from L-glutamyl-tRNA(Glu): step 2/2. The protein operates within porphyrin-containing compound metabolism; chlorophyll biosynthesis. This is Glutamate-1-semialdehyde 2,1-aminomutase, chloroplastic (GSA) from Oryza sativa subsp. japonica (Rice).